The primary structure comprises 319 residues: ATP-dependent 6-phosphofructokinase (319 aa).

G11 is an ATP binding site. Residue 21–25 participates in ADP binding; the sequence is RAVVR. Residues 72 to 73 and 102 to 105 each bind ATP; these read RC and GDGS. Residue D103 participates in Mg(2+) binding. 125–127 is a substrate binding site; the sequence is TID. Catalysis depends on D127, which acts as the Proton acceptor. R154 provides a ligand contact to ADP. Substrate contacts are provided by residues R162 and 169–171; that span reads MGR. ADP contacts are provided by residues 185 to 187, R211, and 213 to 215; these read GAE and KKH. Substrate contacts are provided by residues E222, R243, and 249 to 252; that span reads HIQR.

This sequence belongs to the phosphofructokinase type A (PFKA) family. ATP-dependent PFK group I subfamily. Prokaryotic clade 'B1' sub-subfamily. Homotetramer. Requires Mg(2+) as cofactor.

The protein localises to the cytoplasm. It carries out the reaction beta-D-fructose 6-phosphate + ATP = beta-D-fructose 1,6-bisphosphate + ADP + H(+). It functions in the pathway carbohydrate degradation; glycolysis; D-glyceraldehyde 3-phosphate and glycerone phosphate from D-glucose: step 3/4. With respect to regulation, allosterically activated by ADP and other diphosphonucleosides, and allosterically inhibited by phosphoenolpyruvate. Its function is as follows. Catalyzes the phosphorylation of D-fructose 6-phosphate to fructose 1,6-bisphosphate by ATP, the first committing step of glycolysis. This is ATP-dependent 6-phosphofructokinase from Bacillus pumilus (strain SAFR-032).